Consider the following 179-residue polypeptide: Acireductone dioxygenase (179 aa).

Fe(2+)-binding residues include histidine 99, histidine 101, glutamate 105, and histidine 144. Residues histidine 99, histidine 101, glutamate 105, and histidine 144 each coordinate Ni(2+).

It belongs to the acireductone dioxygenase (ARD) family. As to quaternary structure, monomer. Fe(2+) is required as a cofactor. Ni(2+) serves as cofactor.

It catalyses the reaction 1,2-dihydroxy-5-(methylsulfanyl)pent-1-en-3-one + O2 = 3-(methylsulfanyl)propanoate + CO + formate + 2 H(+). The enzyme catalyses 1,2-dihydroxy-5-(methylsulfanyl)pent-1-en-3-one + O2 = 4-methylsulfanyl-2-oxobutanoate + formate + 2 H(+). It functions in the pathway amino-acid biosynthesis; L-methionine biosynthesis via salvage pathway; L-methionine from S-methyl-5-thio-alpha-D-ribose 1-phosphate: step 5/6. Its function is as follows. Catalyzes 2 different reactions between oxygen and the acireductone 1,2-dihydroxy-3-keto-5-methylthiopentene (DHK-MTPene) depending upon the metal bound in the active site. Fe-containing acireductone dioxygenase (Fe-ARD) produces formate and 2-keto-4-methylthiobutyrate (KMTB), the alpha-ketoacid precursor of methionine in the methionine recycle pathway. Ni-containing acireductone dioxygenase (Ni-ARD) produces methylthiopropionate, carbon monoxide and formate, and does not lie on the methionine recycle pathway. The protein is Acireductone dioxygenase of Exiguobacterium sibiricum (strain DSM 17290 / CCUG 55495 / CIP 109462 / JCM 13490 / 255-15).